Consider the following 30-residue polypeptide: Protamine-YII (30 aa).

Positions 1–30 (PRRRTRRASRPVRRRRPRRVSRRRRARRRR) are disordered.

As to expression, testis.

It localises to the nucleus. It is found in the chromosome. Protamines substitute for histones in the chromatin of sperm during the haploid phase of spermatogenesis. They compact sperm DNA into a highly condensed, stable and inactive complex. This is Protamine-YII from Clupea harengus (Atlantic herring).